A 268-amino-acid polypeptide reads, in one-letter code: Indole-3-glycerol phosphate synthase 2 (268 aa).

This sequence belongs to the TrpC family.

The enzyme catalyses 1-(2-carboxyphenylamino)-1-deoxy-D-ribulose 5-phosphate + H(+) = (1S,2R)-1-C-(indol-3-yl)glycerol 3-phosphate + CO2 + H2O. It participates in amino-acid biosynthesis; L-tryptophan biosynthesis; L-tryptophan from chorismate: step 4/5. The sequence is that of Indole-3-glycerol phosphate synthase 2 (trpC2) from Ralstonia nicotianae (strain ATCC BAA-1114 / GMI1000) (Ralstonia solanacearum).